Reading from the N-terminus, the 250-residue chain is 3-deoxy-manno-octulosonate cytidylyltransferase (250 aa).

It belongs to the KdsB family.

Its subcellular location is the cytoplasm. It catalyses the reaction 3-deoxy-alpha-D-manno-oct-2-ulosonate + CTP = CMP-3-deoxy-beta-D-manno-octulosonate + diphosphate. It functions in the pathway nucleotide-sugar biosynthesis; CMP-3-deoxy-D-manno-octulosonate biosynthesis; CMP-3-deoxy-D-manno-octulosonate from 3-deoxy-D-manno-octulosonate and CTP: step 1/1. The protein operates within bacterial outer membrane biogenesis; lipopolysaccharide biosynthesis. Functionally, activates KDO (a required 8-carbon sugar) for incorporation into bacterial lipopolysaccharide in Gram-negative bacteria. In Francisella tularensis subsp. tularensis (strain FSC 198), this protein is 3-deoxy-manno-octulosonate cytidylyltransferase.